Reading from the N-terminus, the 232-residue chain is Large ribosomal subunit protein uL1 (232 aa).

The protein belongs to the universal ribosomal protein uL1 family. In terms of assembly, part of the 50S ribosomal subunit.

Binds directly to 23S rRNA. The L1 stalk is quite mobile in the ribosome, and is involved in E site tRNA release. Functionally, protein L1 is also a translational repressor protein, it controls the translation of the L11 operon by binding to its mRNA. The polypeptide is Large ribosomal subunit protein uL1 (Bacillus cereus (strain ATCC 14579 / DSM 31 / CCUG 7414 / JCM 2152 / NBRC 15305 / NCIMB 9373 / NCTC 2599 / NRRL B-3711)).